We begin with the raw amino-acid sequence, 369 residues long: RAB6-interacting golgin (369 aa).

Residues 1-128 form a disordered region; sequence MAQGWAGFSE…HNNVEILPPK (128 aa). A compositionally biased stretch (basic and acidic residues) spans 11–27; that stretch reads EELRRLKQTKDPFEPQR. Polar residues-rich tracts occupy residues 46-61 and 82-93; these read EQSQKLGLQDGSTSLL and SPTLPSHFTLTS. Basic and acidic residues predominate over residues 106-120; sequence QPKELGLENSHDGHN. A coiled-coil region spans residues 145-297; that stretch reads RWEVLQQEQR…EVERLLHEQE (153 aa). Positions 188–369 are necessary for interaction with RCHY1; it reads IQKELQALDD…GNDISAALAT (182 aa). Residues 334-369 form a disordered region; the sequence is VSPKVDDQCGNSSSIPFLSPNCPNQEGNDISAALAT. Residues 342-361 are compositionally biased toward polar residues; the sequence is CGNSSSIPFLSPNCPNQEGN.

It belongs to the GORAB family. Interacts with SCYL1. Interacts with RCHY1 and RAB6A/RAB6.

Its subcellular location is the cytoplasm. It is found in the golgi apparatus. The polypeptide is RAB6-interacting golgin (GORAB) (Homo sapiens (Human)).